Here is a 70-residue protein sequence, read N- to C-terminus: NADH dehydrogenase [ubiquinone] 1 alpha subcomplex subunit 1 (70 aa).

A helical transmembrane segment spans residues 1-21 (MWFEILPGLSVMGVCLLIPGL).

Belongs to the complex I NDUFA1 subunit family. Complex I is composed of 45 different subunits. Primarily expressed in heart and skeletal muscle.

It localises to the mitochondrion inner membrane. Accessory subunit of the mitochondrial membrane respiratory chain NADH dehydrogenase (Complex I), that is believed not to be involved in catalysis. Complex I functions in the transfer of electrons from NADH to the respiratory chain. The immediate electron acceptor for the enzyme is believed to be ubiquinone. The polypeptide is NADH dehydrogenase [ubiquinone] 1 alpha subcomplex subunit 1 (NDUFA1) (Homo sapiens (Human)).